The chain runs to 575 residues: Phosphoenolpyruvate-protein phosphotransferase (575 aa).

Tyrosine 122 carries the phosphotyrosine modification. Histidine 189 serves as the catalytic Tele-phosphohistidine intermediate. Phosphoenolpyruvate is bound by residues arginine 296 and arginine 332. Mg(2+)-binding residues include glutamate 431 and aspartate 455. Phosphoenolpyruvate contacts are provided by residues 454 to 455 (ND) and arginine 465. Cysteine 502 functions as the Proton donor in the catalytic mechanism.

The protein belongs to the PEP-utilizing enzyme family. In terms of assembly, homodimer. Interacts with the pole-localizer protein TmaR. Binding to TmaR is reversible as long as TmaR can get phosphorylated, whereas binding to non-phosphorylated TmaR is very strong and shifts the equilibrium toward binding. The cofactor is Mg(2+). Phosphorylated on Tyr-122. Phosphorylation on Tyr-122 is important for polar localization but not for interaction with TmaR and for activity.

Its subcellular location is the cytoplasm. The catalysed reaction is L-histidyl-[protein] + phosphoenolpyruvate = N(pros)-phospho-L-histidyl-[protein] + pyruvate. With respect to regulation, inhibited by oxalate. Its function is as follows. General (non sugar-specific) component of the phosphoenolpyruvate-dependent sugar phosphotransferase system (sugar PTS). This major carbohydrate active-transport system catalyzes the phosphorylation of incoming sugar substrates concomitantly with their translocation across the cell membrane. Enzyme I transfers the phosphoryl group from phosphoenolpyruvate (PEP) to the phosphoryl carrier protein (HPr). Can also use (Z)-3-fluoro-PEP (ZFPEP), (Z)-3-methyl-PEP (ZMePEP), (Z)-3-chloro-PEP (ZClPEP) and (E)-3-chloro-PEP (EClPEP) as alternative phosphoryl donors. The chain is Phosphoenolpyruvate-protein phosphotransferase from Escherichia coli (strain K12).